The sequence spans 287 residues: tRNA (guanine(9)-N1)-methyltransferase (287 aa).

A disordered region spans residues 1–27; sequence MSDTSDLVDGKWQRLPPVPEGMSKSQW. The SAM-dependent MTase TRM10-type domain occupies 79–272; it reads EPRVNRDQVA…SVIPSRKLDP (194 aa). S-adenosyl-L-methionine-binding positions include 179-180, G199, 203-207, C211, L225, and 237-239; these read LT, DKNRH, and KVL. The active-site Proton acceptor is D203. Over residues 268–278 the composition is skewed to basic and acidic residues; that stretch reads RKLDPVKEKEQ. Residues 268–287 form a disordered region; that stretch reads RKLDPVKEKEQQQQQQQQQQ.

Belongs to the class IV-like SAM-binding methyltransferase superfamily. TRM10 family. Monomer.

It localises to the cytoplasm. Its subcellular location is the nucleus. It carries out the reaction guanosine(9) in tRNA + S-adenosyl-L-methionine = N(1)-methylguanosine(9) in tRNA + S-adenosyl-L-homocysteine + H(+). In terms of biological role, S-adenosyl-L-methionine-dependent guanine N(1)-methyltransferase that catalyzes the formation of N(1)-methylguanine at position 9 (m1G9) in cytoplasmic tRNA. The polypeptide is tRNA (guanine(9)-N1)-methyltransferase (Candida glabrata (strain ATCC 2001 / BCRC 20586 / JCM 3761 / NBRC 0622 / NRRL Y-65 / CBS 138) (Yeast)).